The following is a 341-amino-acid chain: MKALSKLKAEKGIWLVDAPKPEMGHNDLLIKIKKTAICGTDMHIYNWDEWSQKTIPVPMVVGHEYVGEVVDIGQEVRGFNIGDRVSGEGHITCGHCRNCRAGRTHLCRNTSGVGVNREGSFAEYLVIPAFNAFKIPDDISDDLASIFDPFGNAVHTALSFDLVGEDVLITGAGPIGIMAAAVCRHVGARHVVITDVNEYRLELARKMGATRAVNVAQENLKDVMKELGMTEGFDVGLEMSGVPSAFRAMLDTMNHGGKIAMLGIPGGEMAIDWSKVIFKGLVIKGIYGREMFETWYKMASLIQSGLDISPIITHHYKIDDFQKGFDAMGSGQSGKVILSWD.

Residue Cys-38 participates in Zn(2+) binding. Residues Thr-40 and His-43 each act as charge relay system in the active site. His-63, Glu-64, Cys-93, Cys-96, Cys-99, and Cys-107 together coordinate Zn(2+). Residues Ile-175, Asp-195, Arg-200, 262–264, and 286–287 each bind NAD(+); these read LGI and IY.

It belongs to the zinc-containing alcohol dehydrogenase family. In terms of assembly, homotetramer. The cofactor is Zn(2+).

It is found in the cytoplasm. It carries out the reaction L-threonine + NAD(+) = (2S)-2-amino-3-oxobutanoate + NADH + H(+). It functions in the pathway amino-acid degradation; L-threonine degradation via oxydo-reductase pathway; glycine from L-threonine: step 1/2. Its function is as follows. Catalyzes the NAD(+)-dependent oxidation of L-threonine to 2-amino-3-ketobutyrate. This is L-threonine 3-dehydrogenase from Shewanella oneidensis (strain ATCC 700550 / JCM 31522 / CIP 106686 / LMG 19005 / NCIMB 14063 / MR-1).